A 385-amino-acid chain; its full sequence is Protein kup-1 (385 aa).

2 disordered regions span residues 1–20 (MDDELDYGSDHSIHGDVRED) and 326–385 (SLAS…PDEY). Basic and acidic residues-rich tracts occupy residues 8-20 (GSDHSIHGDVRED), 339-351 (RTDEKDYEKDDIV), and 364-385 (GRVERPIRERIQFPGREDPDEY).

This chain is Protein kup-1 (kup-1), found in Caenorhabditis elegans.